A 1072-amino-acid chain; its full sequence is Carbamoyl phosphate synthase large chain (1072 aa).

The carboxyphosphate synthetic domain stretch occupies residues 1–401 (MPKRLDINTI…SLLKAVRSLE (401 aa)). ATP-binding residues include Arg129, Arg169, Gly175, Gly176, Lys208, Ile210, Glu215, Gly241, Val242, His243, Gln284, and Glu298. In terms of domain architecture, ATP-grasp 1 spans 133 to 327 (RTLMQELNEP…IAKLAAKIAV (195 aa)). Mg(2+) contacts are provided by Gln284, Glu298, and Asn300. The Mn(2+) site is built by Gln284, Glu298, and Asn300. The tract at residues 402–546 (LGVYHLELEH…YSTYGDENES (145 aa)) is oligomerization domain. The interval 547–929 (VRTDRKSVVV…ALYKGLVASG (383 aa)) is carbamoyl phosphate synthetic domain. Residues 671–861 (EAALTQLGIP…MANVATKVIL (191 aa)) form the ATP-grasp 2 domain. The ATP site is built by Arg707, Arg746, Glu752, Gly777, Val778, His779, Ser780, Gln820, and Glu832. Residues Gln820, Glu832, and Asn834 each coordinate Mg(2+). Residues Gln820, Glu832, and Asn834 each contribute to the Mn(2+) site. The 143-residue stretch at 930-1072 (INIPTHGSVI…QTKRHEVVHA (143 aa)) folds into the MGS-like domain. An allosteric domain region spans residues 930–1072 (INIPTHGSVI…QTKRHEVVHA (143 aa)).

Belongs to the CarB family. Composed of two chains; the small (or glutamine) chain promotes the hydrolysis of glutamine to ammonia, which is used by the large (or ammonia) chain to synthesize carbamoyl phosphate. Tetramer of heterodimers (alpha,beta)4. Mg(2+) is required as a cofactor. Mn(2+) serves as cofactor.

It catalyses the reaction hydrogencarbonate + L-glutamine + 2 ATP + H2O = carbamoyl phosphate + L-glutamate + 2 ADP + phosphate + 2 H(+). It carries out the reaction hydrogencarbonate + NH4(+) + 2 ATP = carbamoyl phosphate + 2 ADP + phosphate + 2 H(+). It functions in the pathway amino-acid biosynthesis; L-arginine biosynthesis; carbamoyl phosphate from bicarbonate: step 1/1. Its pathway is pyrimidine metabolism; UMP biosynthesis via de novo pathway; (S)-dihydroorotate from bicarbonate: step 1/3. Its function is as follows. Large subunit of the glutamine-dependent carbamoyl phosphate synthetase (CPSase). CPSase catalyzes the formation of carbamoyl phosphate from the ammonia moiety of glutamine, carbonate, and phosphate donated by ATP, constituting the first step of 2 biosynthetic pathways, one leading to arginine and/or urea and the other to pyrimidine nucleotides. The large subunit (synthetase) binds the substrates ammonia (free or transferred from glutamine from the small subunit), hydrogencarbonate and ATP and carries out an ATP-coupled ligase reaction, activating hydrogencarbonate by forming carboxy phosphate which reacts with ammonia to form carbamoyl phosphate. This Bacillus cereus (strain G9842) protein is Carbamoyl phosphate synthase large chain.